A 672-amino-acid polypeptide reads, in one-letter code: DNA ligase (672 aa).

Residues 34–38, 83–84, and glutamate 117 contribute to the NAD(+) site; these read DAEYD and SL. The active-site N6-AMP-lysine intermediate is the lysine 119. NAD(+) is bound by residues arginine 140, glutamate 177, lysine 293, and lysine 317. 4 residues coordinate Zn(2+): cysteine 411, cysteine 414, cysteine 429, and cysteine 434. The BRCT domain occupies 591-672; that stretch reads RVGGRFTGKT…FLAMLGVCRT (82 aa).

The protein belongs to the NAD-dependent DNA ligase family. LigA subfamily. It depends on Mg(2+) as a cofactor. The cofactor is Mn(2+).

It catalyses the reaction NAD(+) + (deoxyribonucleotide)n-3'-hydroxyl + 5'-phospho-(deoxyribonucleotide)m = (deoxyribonucleotide)n+m + AMP + beta-nicotinamide D-nucleotide.. DNA ligase that catalyzes the formation of phosphodiester linkages between 5'-phosphoryl and 3'-hydroxyl groups in double-stranded DNA using NAD as a coenzyme and as the energy source for the reaction. It is essential for DNA replication and repair of damaged DNA. This Geotalea uraniireducens (strain Rf4) (Geobacter uraniireducens) protein is DNA ligase.